Here is a 169-residue protein sequence, read N- to C-terminus: Methane monooxygenase component A gamma chain (169 aa).

As to quaternary structure, m.trichosporium has two forms of methane monooxygenase, a soluble and a membrane-bound type. The soluble type consists of four components (A to D): protein A, comprising three chains, in an alpha-2, beta-2, gamma-2 configuration, is a nonheme iron protein containing an unusual mu-hydroxo bridge structure at its active site and interacts with both oxygen and methane.

The catalysed reaction is methane + NADH + O2 + H(+) = methanol + NAD(+) + H2O. It carries out the reaction methane + NADPH + O2 + H(+) = methanol + NADP(+) + H2O. Its function is as follows. Responsible for the initial oxygenation of methane to methanol in methanotrophs. It also catalyzes the monohydroxylation of a variety of unactivated alkenes, alicyclic, aromatic and heterocyclic compounds. The protein is Methane monooxygenase component A gamma chain (mmoZ) of Methylosinus trichosporium.